We begin with the raw amino-acid sequence, 468 residues long: Eukaryotic translation initiation factor 3 subunit M (468 aa).

The segment at 40 to 61 (VAPLIEPLRQQEQSEEEPDRKQ) is disordered. One can recognise a PCI domain in the interval 206 to 377 (DLELAQTHVV…SEFLVHRATY (172 aa)). The segment at 419–468 (QAAAEEVGQGKSGDKGAKGGDRRRNPQQQQQSQPSQPQQAREVELVGGAE) is disordered. Basic and acidic residues predominate over residues 430–442 (SGDKGAKGGDRRR). Positions 444–457 (PQQQQQSQPSQPQQ) are enriched in low complexity.

This sequence belongs to the eIF-3 subunit M family. As to quaternary structure, component of the eukaryotic translation initiation factor 3 (eIF-3) complex.

The protein resides in the cytoplasm. Its function is as follows. Component of the eukaryotic translation initiation factor 3 (eIF-3) complex, which is involved in protein synthesis of a specialized repertoire of mRNAs and, together with other initiation factors, stimulates binding of mRNA and methionyl-tRNAi to the 40S ribosome. The eIF-3 complex specifically targets and initiates translation of a subset of mRNAs involved in cell proliferation. The protein is Eukaryotic translation initiation factor 3 subunit M of Aspergillus fumigatus (strain CBS 144.89 / FGSC A1163 / CEA10) (Neosartorya fumigata).